Here is a 135-residue protein sequence, read N- to C-terminus: MAGRGKAIGAGAAKKATSRSSKAGLQFPVGRIARFLKAGKYAERVGAGAPVYLAAVLEYLAAEVLELAGNAARDNKKTRIVPRHIQLAVRNDEELTKLLGGATIASGGVMPNIHQHLLPKKAGSSKASHADDDDN.

It belongs to the histone H2A family. The nucleosome is a histone octamer containing two molecules each of H2A, H2B, H3 and H4 assembled in one H3-H4 heterotetramer and two H2A-H2B heterodimers. The octamer wraps approximately 147 bp of DNA.

The protein resides in the nucleus. It localises to the chromosome. Its function is as follows. Core component of nucleosome. Nucleosomes wrap and compact DNA into chromatin, limiting DNA accessibility to the cellular machineries which require DNA as a template. Histones thereby play a central role in transcription regulation, DNA repair, DNA replication and chromosomal stability. DNA accessibility is regulated via a complex set of post-translational modifications of histones, also called histone code, and nucleosome remodeling. This Oryza sativa subsp. indica (Rice) protein is Probable histone H2A.7.